Here is a 334-residue protein sequence, read N- to C-terminus: tRNA N6-adenosine threonylcarbamoyltransferase (334 aa).

Fe cation is bound by residues H110 and H114. Substrate contacts are provided by residues 133-137, D166, G179, D183, and N275; that span reads IVSGG. D303 provides a ligand contact to Fe cation.

The protein belongs to the KAE1 / TsaD family. Fe(2+) serves as cofactor.

The protein localises to the cytoplasm. It carries out the reaction L-threonylcarbamoyladenylate + adenosine(37) in tRNA = N(6)-L-threonylcarbamoyladenosine(37) in tRNA + AMP + H(+). Its function is as follows. Required for the formation of a threonylcarbamoyl group on adenosine at position 37 (t(6)A37) in tRNAs that read codons beginning with adenine. Is involved in the transfer of the threonylcarbamoyl moiety of threonylcarbamoyl-AMP (TC-AMP) to the N6 group of A37, together with TsaE and TsaB. TsaD likely plays a direct catalytic role in this reaction. This is tRNA N6-adenosine threonylcarbamoyltransferase from Salinibacter ruber (strain DSM 13855 / M31).